We begin with the raw amino-acid sequence, 2460 residues long: Reducing polyketide synthase BOA6 (2460 aa).

The 434-residue stretch at 5 to 438 (NEPIAVIGTG…GTNAHAILES (434 aa)) folds into the Ketosynthase family 3 (KS3) domain. Residues Cys178, His317, and His360 each act as for beta-ketoacyl synthase activity in the active site. A malonyl-CoA:ACP transacylase (MAT) domain region spans residues 549–864 (VFTGQGAQWP…PYTGVLSRGD (316 aa)). The N-terminal hotdog fold stretch occupies residues 938 to 1073 (HELLGVRCAD…GRIKMTLGTP (136 aa)). Residues 938-1244 (HELLGVRCAD…QMQSFTAARP (307 aa)) form a dehydratase (DH) domain region. A PKS/mFAS DH domain is found at 938 to 1245 (HELLGVRCAD…MQSFTAARPS (308 aa)). His970 acts as the Proton acceptor; for dehydratase activity in catalysis. Residues 1088 to 1245 (LGPLNVDRFY…MQSFTAARPS (158 aa)) form a C-terminal hotdog fold region. The Proton donor; for dehydratase activity role is filled by Asp1145. The segment at 1399 to 1586 (NKFVTAAMKK…VNDFKDKSRY (188 aa)) is methyltransferase (MT) domain. Residues 2098–2266 (SYLLAGLTGD…KRGGVASVIH (169 aa)) are ketoreductase (KR) domain. A Carrier domain is found at 2378–2456 (DEVLGVMQKC…DLCELACEEY (79 aa)). Ser2416 is modified (O-(pantetheine 4'-phosphoryl)serine).

The protein operates within polyketide biosynthesis. Functionally, reducing polyketide synthase; part of the gene cluster A that mediates the biosynthesis of botcinic acid and its botcinin derivatives, acetate-derived polyketides that contribute to virulence when combined with the sesquiterpene botrydial. Botcinic acid and its derivatives have been shown to induce chlorosis and necrosis during host plant infection, but also have antifungal activities. Two polyketide synthases, BOA6 and BOA9, are involved in the biosynthesis of botcinins. BOA6 mediates the formation of the per-methylated tetraketide core by condensation of four units of malonyl-CoA with one unit of acetyl-CoA, which would be methylated in activated methylene groups to yield a bicyclic acid intermediate that could then either be converted to botrylactone derivatives or lose the starter acetate unit through a retro-Claisen type C-C bond cleavage to yield botcinin derivatives. The second polyketide synthase, BOA9, is probably required for the biosynthesis of the tetraketide side chain of botcinins. The methyltransferase (MT) domain within BOA6 is probably responsible for the incorporation of four methyl groups. The trans-enoyl reductase BOA5 might take over the enoyl reductase function of BOA6 that misses an ER domain. The monooxygenases BOA2, BOA3 and BOA4 might be involved in further hydroxylations at C4, C5 and C8, whereas BOA7, close to BOA9, could potentially be involved in the hydroxylation at C4 in the side chain of botcinins. This chain is Reducing polyketide synthase BOA6, found in Botryotinia fuckeliana (strain B05.10) (Noble rot fungus).